We begin with the raw amino-acid sequence, 384 residues long: Succinyl-diaminopimelate desuccinylase (384 aa).

A Zn(2+)-binding site is contributed by His71. Asp73 is an active-site residue. Asp104 provides a ligand contact to Zn(2+). The Proton acceptor role is filled by Glu139. Residues Glu140, Glu168, and His357 each contribute to the Zn(2+) site.

This sequence belongs to the peptidase M20A family. DapE subfamily. As to quaternary structure, homodimer. Zn(2+) serves as cofactor. It depends on Co(2+) as a cofactor.

The catalysed reaction is N-succinyl-(2S,6S)-2,6-diaminopimelate + H2O = (2S,6S)-2,6-diaminopimelate + succinate. The protein operates within amino-acid biosynthesis; L-lysine biosynthesis via DAP pathway; LL-2,6-diaminopimelate from (S)-tetrahydrodipicolinate (succinylase route): step 3/3. Its function is as follows. Catalyzes the hydrolysis of N-succinyl-L,L-diaminopimelic acid (SDAP), forming succinate and LL-2,6-diaminopimelate (DAP), an intermediate involved in the bacterial biosynthesis of lysine and meso-diaminopimelic acid, an essential component of bacterial cell walls. In Afipia carboxidovorans (strain ATCC 49405 / DSM 1227 / KCTC 32145 / OM5) (Oligotropha carboxidovorans), this protein is Succinyl-diaminopimelate desuccinylase.